A 307-amino-acid polypeptide reads, in one-letter code: Elongation factor Ts (307 aa).

The involved in Mg(2+) ion dislocation from EF-Tu stretch occupies residues 80 to 83 (TDFV).

The protein belongs to the EF-Ts family.

It is found in the cytoplasm. Its function is as follows. Associates with the EF-Tu.GDP complex and induces the exchange of GDP to GTP. It remains bound to the aminoacyl-tRNA.EF-Tu.GTP complex up to the GTP hydrolysis stage on the ribosome. The protein is Elongation factor Ts of Clostridium botulinum (strain Kyoto / Type A2).